A 128-amino-acid chain; its full sequence is Small ribosomal subunit protein uS9 (128 aa).

Belongs to the universal ribosomal protein uS9 family.

The sequence is that of Small ribosomal subunit protein uS9 from Christiangramia forsetii (strain DSM 17595 / CGMCC 1.15422 / KT0803) (Gramella forsetii).